Here is a 655-residue protein sequence, read N- to C-terminus: Acetyl-coenzyme A synthetase (655 aa).

CoA is bound by residues 196–199 (RGGR) and T316. ATP is bound by residues 392–394 (GEP), 416–421 (DTWWQT), D508, and R523. S531 lines the CoA pocket. R534 contacts ATP. Mg(2+) contacts are provided by V545, H547, and V550. At K620 the chain carries N6-acetyllysine.

This sequence belongs to the ATP-dependent AMP-binding enzyme family. Mg(2+) is required as a cofactor. Acetylated. Deacetylation by the SIR2-homolog deacetylase activates the enzyme.

It carries out the reaction acetate + ATP + CoA = acetyl-CoA + AMP + diphosphate. Its function is as follows. Catalyzes the conversion of acetate into acetyl-CoA (AcCoA), an essential intermediate at the junction of anabolic and catabolic pathways. AcsA undergoes a two-step reaction. In the first half reaction, AcsA combines acetate with ATP to form acetyl-adenylate (AcAMP) intermediate. In the second half reaction, it can then transfer the acetyl group from AcAMP to the sulfhydryl group of CoA, forming the product AcCoA. This Nitrosomonas europaea (strain ATCC 19718 / CIP 103999 / KCTC 2705 / NBRC 14298) protein is Acetyl-coenzyme A synthetase.